Reading from the N-terminus, the 219-residue chain is PRELI domain-containing protein 1, mitochondrial (219 aa).

The PRELI/MSF1 domain occupies 36 to 174 (TEDIVHREVT…ILAKLQGEAP (139 aa)).

Forms a complex with TRIAP1 in the mitochondrion intermembrane space. Interacts with OPA1 and AIFM1. Highly expressed in fetal liver; less expressed in fetal brain, lung, and kidney. At the adult stage, expression is drastically reduced in the liver but highly expressed in the spleen, brain, lung, lymph nodes and peripheral blood leukocytes.

Its subcellular location is the mitochondrion. The protein resides in the mitochondrion intermembrane space. It catalyses the reaction a 1,2-diacyl-sn-glycero-3-phosphate(in) = a 1,2-diacyl-sn-glycero-3-phosphate(out). Its function is as follows. Involved in the modulation of the mitochondrial apoptotic pathway by ensuring the accumulation of cardiolipin (CL) in mitochondrial membranes. In vitro, the TRIAP1:PRELID1 complex mediates the transfer of phosphatidic acid (PA) between liposomes and probably functions as a PA transporter across the mitochondrion intermembrane space to provide PA for CL synthesis in the inner membrane. Regulates the mitochondrial apoptotic pathway in primary Th cells. Regulates Th cell differentiation by down-regulating STAT6 thereby reducing IL-4-induced Th2 cell number. May be important for the development of vital and immunocompetent organs. This chain is PRELI domain-containing protein 1, mitochondrial (PRELID1), found in Homo sapiens (Human).